We begin with the raw amino-acid sequence, 779 residues long: Beta-galactosidase 15 (779 aa).

An N-terminal signal peptide occupies residues 1 to 19 (MVSLSFILCCVLVSSCAYA). An N-linked (GlcNAc...) asparagine glycan is attached at asparagine 148. The active-site Proton donor is the glutamate 178. Glutamate 247 functions as the Nucleophile in the catalytic mechanism. N-linked (GlcNAc...) asparagine glycosylation is found at asparagine 248, asparagine 345, asparagine 374, asparagine 489, asparagine 495, and asparagine 555. Residues 694–779 (VYEKNVLELS…AKRLAVEAIC (86 aa)) enclose the SUEL-type lectin domain.

This sequence belongs to the glycosyl hydrolase 35 family. Ubiquitous, with higher levels in roots and siliques.

It is found in the secreted. It localises to the extracellular space. The protein localises to the apoplast. It catalyses the reaction Hydrolysis of terminal non-reducing beta-D-galactose residues in beta-D-galactosides.. The chain is Beta-galactosidase 15 (BGAL15) from Arabidopsis thaliana (Mouse-ear cress).